Here is a 296-residue protein sequence, read N- to C-terminus: 33 kDa chaperonin (296 aa).

2 cysteine pairs are disulfide-bonded: cysteine 238-cysteine 240 and cysteine 271-cysteine 274.

It belongs to the HSP33 family. Under oxidizing conditions two disulfide bonds are formed involving the reactive cysteines. Under reducing conditions zinc is bound to the reactive cysteines and the protein is inactive.

The protein localises to the cytoplasm. Its function is as follows. Redox regulated molecular chaperone. Protects both thermally unfolding and oxidatively damaged proteins from irreversible aggregation. Plays an important role in the bacterial defense system toward oxidative stress. The chain is 33 kDa chaperonin from Clostridium botulinum (strain Okra / Type B1).